Consider the following 110-residue polypeptide: Iron-sulfur cluster assembly protein CyaY (110 aa).

This sequence belongs to the frataxin family.

Involved in iron-sulfur (Fe-S) cluster assembly. May act as a regulator of Fe-S biogenesis. This chain is Iron-sulfur cluster assembly protein CyaY, found in Pseudomonas putida (strain GB-1).